Consider the following 356-residue polypeptide: Phosphate acyltransferase (356 aa).

This sequence belongs to the PlsX family. In terms of assembly, homodimer. Probably interacts with PlsY.

It localises to the cytoplasm. The enzyme catalyses a fatty acyl-[ACP] + phosphate = an acyl phosphate + holo-[ACP]. It functions in the pathway lipid metabolism; phospholipid metabolism. Catalyzes the reversible formation of acyl-phosphate (acyl-PO(4)) from acyl-[acyl-carrier-protein] (acyl-ACP). This enzyme utilizes acyl-ACP as fatty acyl donor, but not acyl-CoA. The sequence is that of Phosphate acyltransferase from Escherichia coli (strain 55989 / EAEC).